The primary structure comprises 103 residues: Zinc-containing ferredoxin (103 aa).

Positions 1-36 (GIDPNYRTSKPVVGDHSGHKIYGPVESPKVLGVHGT) are N-terminal extension. Histidine 19 is a Zn(2+) binding site. Position 29 is an N6-methyllysine (lysine 29). Histidine 34 serves as a coordination point for Zn(2+). 4Fe-4S ferredoxin-type domains are found at residues 35–65 (GTIV…WYET) and 74–103 (KADP…VKPP). Positions 45 and 51 each coordinate [3Fe-4S] cluster. Residue cysteine 55 participates in [4Fe-4S] cluster binding. Residue aspartate 76 participates in Zn(2+) binding. Positions 83, 86, and 89 each coordinate [4Fe-4S] cluster. Cysteine 93 contributes to the [3Fe-4S] cluster binding site.

It depends on [3Fe-4S] cluster as a cofactor. The cofactor is [4Fe-4S] cluster. Zn(2+) is required as a cofactor.

Functionally, ferredoxins are iron-sulfur proteins that transfer electrons in a wide variety of metabolic reactions. This chain is Zinc-containing ferredoxin (zfx), found in Sulfolobus acidocaldarius (strain ATCC 33909 / DSM 639 / JCM 8929 / NBRC 15157 / NCIMB 11770).